A 238-amino-acid chain; its full sequence is Demethylmenaquinone methyltransferase (238 aa).

S-adenosyl-L-methionine-binding positions include threonine 60, aspartate 81, and 108 to 109; that span reads NA.

This sequence belongs to the class I-like SAM-binding methyltransferase superfamily. MenG/UbiE family.

The catalysed reaction is a 2-demethylmenaquinol + S-adenosyl-L-methionine = a menaquinol + S-adenosyl-L-homocysteine + H(+). It functions in the pathway quinol/quinone metabolism; menaquinone biosynthesis; menaquinol from 1,4-dihydroxy-2-naphthoate: step 2/2. Its function is as follows. Methyltransferase required for the conversion of demethylmenaquinol (DMKH2) to menaquinol (MKH2). The chain is Demethylmenaquinone methyltransferase from Oceanobacillus iheyensis (strain DSM 14371 / CIP 107618 / JCM 11309 / KCTC 3954 / HTE831).